A 243-amino-acid polypeptide reads, in one-letter code: Thaumatin-like protein 1 (243 aa).

The N-terminal stretch at 1–22 (MMKTLALYGLTLALFFLSGAHS) is a signal peptide. Disulfide bonds link Cys-31–Cys-242, Cys-79–Cys-88, Cys-93–Cys-100, Cys-148–Cys-231, Cys-153–Cys-214, Cys-161–Cys-177, Cys-181–Cys-190, and Cys-191–Cys-201.

It belongs to the thaumatin family.

The protein localises to the secreted. It is found in the extracellular space. The protein resides in the apoplast. In terms of biological role, possesses antifungal activity. This is Thaumatin-like protein 1 (TL1) from Castanea sativa (Sweet chestnut).